The following is a 315-amino-acid chain: MTAFLDFEKQVAALDRQIAELREMGDDPTLDIEGDIARLEDKSAKLLRDIYARLTPWQKTQVARHPDRPHFKHYVAGLFDDWMPLAGDRNFADDQAILGGLARFRGRRVMVIGHEKGDDIPSRMKHNFGMAKPEGYRKAIRLMQLADRFGLPVITLVDTSGAFPGIQAEERGQAEAIARSTEQCLALGVPMVAAVVGEGGSGGAIALAAANRVLMFEHAVYSVISPEGCASILWRTSDKAAEAAAAMKMSAQDLLALKIIDRIVPEPVGGAHRAPEAAIAALGDALEQELNGLSGLPRDTLLAAREEKFLAMGRA.

One can recognise a CoA carboxyltransferase C-terminal domain in the interval 39 to 292 (LEDKSAKLLR…GDALEQELNG (254 aa)).

This sequence belongs to the AccA family. In terms of assembly, acetyl-CoA carboxylase is a heterohexamer composed of biotin carboxyl carrier protein (AccB), biotin carboxylase (AccC) and two subunits each of ACCase subunit alpha (AccA) and ACCase subunit beta (AccD).

The protein resides in the cytoplasm. The catalysed reaction is N(6)-carboxybiotinyl-L-lysyl-[protein] + acetyl-CoA = N(6)-biotinyl-L-lysyl-[protein] + malonyl-CoA. It functions in the pathway lipid metabolism; malonyl-CoA biosynthesis; malonyl-CoA from acetyl-CoA: step 1/1. In terms of biological role, component of the acetyl coenzyme A carboxylase (ACC) complex. First, biotin carboxylase catalyzes the carboxylation of biotin on its carrier protein (BCCP) and then the CO(2) group is transferred by the carboxyltransferase to acetyl-CoA to form malonyl-CoA. This Sphingopyxis alaskensis (strain DSM 13593 / LMG 18877 / RB2256) (Sphingomonas alaskensis) protein is Acetyl-coenzyme A carboxylase carboxyl transferase subunit alpha.